Reading from the N-terminus, the 140-residue chain is Lysozyme D (140 aa).

The N-terminal stretch at 1-18 (MKAFIVLVALACAAPAFG) is a signal peptide. Residues 19-140 (RTMDRCSLAR…GWLPSIDDCF (122 aa)) form the C-type lysozyme domain. Intrachain disulfides connect cysteine 24–cysteine 139, cysteine 45–cysteine 129, cysteine 80–cysteine 96, and cysteine 92–cysteine 110. Residues glutamate 50 and aspartate 68 contribute to the active site.

Belongs to the glycosyl hydrolase 22 family. Found in the midgut.

The catalysed reaction is Hydrolysis of (1-&gt;4)-beta-linkages between N-acetylmuramic acid and N-acetyl-D-glucosamine residues in a peptidoglycan and between N-acetyl-D-glucosamine residues in chitodextrins.. Unlikely to play an active role in the humoral immune defense. May have a function in the digestion of bacteria in the food. The chain is Lysozyme D (LysD) from Drosophila melanogaster (Fruit fly).